Consider the following 139-residue polypeptide: Cell division protein SepF (139 aa).

The protein belongs to the SepF family. As to quaternary structure, homodimer. Interacts with FtsZ.

It is found in the cytoplasm. Its function is as follows. Cell division protein that is part of the divisome complex and is recruited early to the Z-ring. Probably stimulates Z-ring formation, perhaps through the cross-linking of FtsZ protofilaments. Its function overlaps with FtsA. The sequence is that of Cell division protein SepF from Coprothermobacter proteolyticus (strain ATCC 35245 / DSM 5265 / OCM 4 / BT).